Consider the following 59-residue polypeptide: Early growth response protein 1 (59 aa).

C2H2-type zinc fingers lie at residues 1–18 (CDRRFSRSDELTRHIRIH), 24–46 (FQCRICMRNFSRSDHLTTHIRTH), and 52–59 (FACDICGR).

The protein belongs to the EGR C2H2-type zinc-finger protein family.

The protein resides in the nucleus. The protein localises to the cytoplasm. Functionally, transcriptional regulator. Recognizes and binds to the DNA sequence 5'-GCG(T/G)GGGCG-3'(EGR-site) in the promoter region of target genes. Binds double-stranded target DNA, irrespective of the cytosine methylation status. Regulates the transcription of numerous target genes, and thereby plays an important role in regulating the response to growth factors, DNA damage, and ischemia. Plays a role in the regulation of cell survival, proliferation and cell death. Mediates responses to ischemia and hypoxia; regulates the expression of proteins that are involved in inflammatory processes. Plays a role in regulating the expression of circadian clock genes. This is Early growth response protein 1 (EGR1) from Serinus canaria (Island canary).